We begin with the raw amino-acid sequence, 40 residues long: Trypsin inhibitor (40 aa).

As to quaternary structure, monomer.

It carries out the reaction Preferential cleavage: Arg-|-Xaa, Lys-|-Xaa.. Functionally, inhibits trypsin but not chymotrypsin, papain or porcine pancreatic alpha-amylase. Has insecticidal activity against A.aegypti. Functions by inhibiting the A.aegypti midgut proteases to reduce the survival of larva and adults. This chain is Trypsin inhibitor, found in Cassia leiandra (Marimari).